The following is a 295-amino-acid chain: Ribosomal RNA small subunit methyltransferase A (295 aa).

Positions 31, 33, 58, 79, 104, and 129 each coordinate S-adenosyl-L-methionine.

The protein belongs to the class I-like SAM-binding methyltransferase superfamily. rRNA adenine N(6)-methyltransferase family. RsmA subfamily.

The protein resides in the cytoplasm. It carries out the reaction adenosine(1518)/adenosine(1519) in 16S rRNA + 4 S-adenosyl-L-methionine = N(6)-dimethyladenosine(1518)/N(6)-dimethyladenosine(1519) in 16S rRNA + 4 S-adenosyl-L-homocysteine + 4 H(+). In terms of biological role, specifically dimethylates two adjacent adenosines (A1518 and A1519) in the loop of a conserved hairpin near the 3'-end of 16S rRNA in the 30S particle. May play a critical role in biogenesis of 30S subunits. In Enterococcus faecalis (strain ATCC 700802 / V583), this protein is Ribosomal RNA small subunit methyltransferase A.